The primary structure comprises 288 residues: Prepilin leader peptidase/N-methyltransferase (288 aa).

Residues Phe14–Tyr34 traverse the membrane as a helical segment. Residues Cys71, Cys74, Cys96, and Cys99 each contribute to the Zn(2+) site. 6 consecutive transmembrane segments (helical) span residues Ile103 to Trp123, Ala127 to Ile147, Ile158 to Leu178, Val182 to Val202, Val227 to Leu247, and Met254 to Trp274.

This sequence belongs to the peptidase A24 family. The cofactor is Zn(2+).

The protein localises to the cell inner membrane. The enzyme catalyses Typically cleaves a -Gly-|-Phe- bond to release an N-terminal, basic peptide of 5-8 residues from type IV prepilin, and then N-methylates the new N-terminal amino group, the methyl donor being S-adenosyl-L-methionine.. Functionally, plays an essential role in type IV pili and type II pseudopili formation by proteolytically removing the leader sequence from substrate proteins and subsequently monomethylating the alpha-amino group of the newly exposed N-terminal phenylalanine. This is Prepilin leader peptidase/N-methyltransferase (pilD) from Pseudomonas putida (Arthrobacter siderocapsulatus).